The sequence spans 874 residues: AP-1 complex subunit gamma-1 (874 aa).

Residues 761–873 (TVAKSHTVYT…QDQTDWAQPS (113 aa)) enclose the GAE domain.

The protein belongs to the adaptor complexes large subunit family. As to quaternary structure, adaptor protein complex 1 (AP-1) is a heterotetramer composed of two large adaptins (gamma-type subunit APL4 and beta-type subunit APL2), a medium adaptin (mu-type subunit APM1) and a small adaptin (sigma-type subunit APS1). AP-1 interacts with clathrin.

It is found in the cytoplasmic vesicle. The protein localises to the clathrin-coated vesicle membrane. It localises to the golgi apparatus. In terms of biological role, adaptins are components of the adaptor complexes which link clathrin to receptors in coated vesicles. Clathrin-associated protein complexes are believed to interact with the cytoplasmic tails of membrane proteins, leading to their selection and concentration. The AP-1 complex interacts directly with clathrin. Required for apical growth extension. The chain is AP-1 complex subunit gamma-1 (APL4) from Mycosarcoma maydis (Corn smut fungus).